Reading from the N-terminus, the 840-residue chain is Heat shock 70 kDa protein 4 (840 aa).

Lys-53 carries the N6-acetyllysine modification. Residue Ser-76 is modified to Phosphoserine. Residues Tyr-89 and Tyr-336 each carry the phosphotyrosine modification. Phosphoserine occurs at positions 393 and 415. Lys-430 carries the post-translational modification N6-acetyllysine. Positions 500 to 575 (VHKSEENEEP…QAKKAKVKTS (76 aa)) are disordered. Over residues 514-533 (QNAKEEEKMQVDQEEPHVEE) the composition is skewed to basic and acidic residues. Residue Thr-538 is modified to Phosphothreonine. Residues Ser-546 and Ser-647 each carry the phosphoserine modification. Residue Tyr-660 is modified to Phosphotyrosine. Position 679 is an N6-acetyllysine (Lys-679). A Phosphoserine modification is found at Ser-756. Lys-773 is modified (N6-methyllysine). The interval 779 to 840 (CSPIISKPKP…DKKLPEMDID (62 aa)) is disordered. 2 stretches are compositionally biased toward basic and acidic residues: residues 788-799 (PKVEPPKEEQKN) and 829-840 (DSDKKLPEMDID).

It belongs to the heat shock protein 70 family. As to quaternary structure, interacts with TJP1/ZO-1.

The protein localises to the cytoplasm. The polypeptide is Heat shock 70 kDa protein 4 (HSPA4) (Homo sapiens (Human)).